The sequence spans 936 residues: UPF0746 protein DDB_G0280787 (936 aa).

Over residues 1-19 (MISNKRKEIDTIDGHHEKD) the composition is skewed to basic and acidic residues. The segment at 1–30 (MISNKRKEIDTIDGHHEKDNDDDDSDGIDN) is disordered. In terms of domain architecture, SAP spans 44 to 78 (SGSTNYRELQIIAKSLGLASNGKKQLVYNRIEGYF). The disordered stretch occupies residues 91-110 (ETNQQEEKKEEEQQQPQPQE).

The protein belongs to the UPF0746 family.

This Dictyostelium discoideum (Social amoeba) protein is UPF0746 protein DDB_G0280787.